The sequence spans 201 residues: Protease (201 aa).

Catalysis depends on residues His-55, Asp-72, and Cys-122.

The protein belongs to the peptidase C5 family. In terms of assembly, interacts with protease cofactor pVI-C; this interaction is necessary for protease activation.

It is found in the virion. The protein localises to the host nucleus. It catalyses the reaction Cleaves proteins of the adenovirus and its host cell at two consensus sites: -Yaa-Xaa-Gly-Gly-|-Xaa- and -Yaa-Xaa-Gly-Xaa-|-Gly- (in which Yaa is Met, Ile or Leu, and Xaa is any amino acid).. Its activity is regulated as follows. Requires DNA and protease cofactor for maximal activation. Inside nascent virions, becomes partially activated by binding to the viral DNA, allowing it to cleave the cofactor that binds to the protease and fully activates it. Actin, like the viral protease cofactor, seems to act as a cofactor in the cleavage of cytokeratin 18 and of actin itself. Functionally, cleaves viral precursor proteins (pTP, pIIIa, pVI, pVII, pVIII, and pX) inside newly assembled particles giving rise to mature virions. Protease complexed to its cofactor slides along the viral DNA to specifically locate and cleave the viral precursors. Mature virions have a weakened organization compared to the unmature virions, thereby facilitating subsequent uncoating. Without maturation, the particle lacks infectivity and is unable to uncoat. Late in adenovirus infection, in the cytoplasm, may participate in the cytoskeleton destruction. Cleaves host cell cytoskeletal keratins K7 and K18. In Bovine adenovirus 4 (BAdV-4), this protein is Protease.